The sequence spans 489 residues: Topoisomerase I damage affected protein 11 (489 aa).

Disordered regions lie at residues 1–199, 263–321, 344–370, 391–413, and 439–477; these read MDQK…QSMA, INVS…DDNK, ERTL…KSVS, EDGH…HGQV, and DDNS…DSTL. Polar residues predominate over residues 19–35; the sequence is DTSSRYTTGSISPQFAS. Basic and acidic residues predominate over residues 73–89; sequence EESHNHPLKEDKSESRQ. Composition is skewed to polar residues over residues 90-103, 128-147, and 156-167; these read RQVS…SSKG, PQSQ…NLHP, and NATTQTPSSMSM. A compositionally biased stretch (low complexity) spans 182 to 197; it reads SSKRNSMHSRTSSSQS. The stretch at 210–266 forms a coiled coil; it reads VNALLQSLANKELELLECKRKIDDLKKQLHMEENIYQNKANELQELKNKVSKNINVS. Over residues 263 to 281 the composition is skewed to polar residues; that stretch reads INVSGSNQPVFNKTSTTGR. Positions 396–411 are enriched in polar residues; the sequence is TQQSNSNVNRPKNTHG. A compositionally biased stretch (basic residues) spans 447–460; it reads KQRSGRTAVRKTKS. Over residues 468–477 the composition is skewed to acidic residues; it reads DDSDDGDSTL.

This sequence belongs to the TDA11 family.

It localises to the cytoplasm. The protein is Topoisomerase I damage affected protein 11 (TDA11) of Candida glabrata (strain ATCC 2001 / BCRC 20586 / JCM 3761 / NBRC 0622 / NRRL Y-65 / CBS 138) (Yeast).